A 129-amino-acid chain; its full sequence is Prefoldin subunit alpha (129 aa).

This sequence belongs to the prefoldin alpha subunit family. In terms of assembly, heterohexamer of two alpha and four beta subunits.

The protein resides in the cytoplasm. Its function is as follows. Molecular chaperone capable of stabilizing a range of proteins. Seems to fulfill an ATP-independent, HSP70-like function in archaeal de novo protein folding. The chain is Prefoldin subunit alpha from Thermofilum pendens (strain DSM 2475 / Hrk 5).